Consider the following 226-residue polypeptide: Fibrillarin-like rRNA/tRNA 2'-O-methyltransferase (226 aa).

S-adenosyl-L-methionine contacts are provided by residues 85–86 (TT), 104–105 (EF), 129–130 (DA), and 149–152 (DVAQ).

The protein belongs to the methyltransferase superfamily. Fibrillarin family. Interacts with nop5. Component of box C/D small ribonucleoprotein (sRNP) particles that contain rpl7ae, FlpA and nop5, plus a guide RNA.

Functionally, involved in pre-rRNA and tRNA processing. Utilizes the methyl donor S-adenosyl-L-methionine to catalyze the site-specific 2'-hydroxyl methylation of ribose moieties in rRNA and tRNA. Site specificity is provided by a guide RNA that base pairs with the substrate. Methylation occurs at a characteristic distance from the sequence involved in base pairing with the guide RNA. This is Fibrillarin-like rRNA/tRNA 2'-O-methyltransferase from Thermococcus sibiricus (strain DSM 12597 / MM 739).